A 267-amino-acid polypeptide reads, in one-letter code: NAD kinase 1 (267 aa).

The active-site Proton acceptor is the aspartate 45. NAD(+) is bound by residues 45 to 46 (DG), 122 to 123 (NE), arginine 149, aspartate 151, and alanine 186.

The protein belongs to the NAD kinase family. A divalent metal cation is required as a cofactor.

The protein localises to the cytoplasm. The enzyme catalyses NAD(+) + ATP = ADP + NADP(+) + H(+). In terms of biological role, involved in the regulation of the intracellular balance of NAD and NADP, and is a key enzyme in the biosynthesis of NADP. Catalyzes specifically the phosphorylation on 2'-hydroxyl of the adenosine moiety of NAD to yield NADP. The polypeptide is NAD kinase 1 (Oceanobacillus iheyensis (strain DSM 14371 / CIP 107618 / JCM 11309 / KCTC 3954 / HTE831)).